We begin with the raw amino-acid sequence, 84 residues long: Putative membrane protein insertion efficiency factor (84 aa).

The protein belongs to the UPF0161 family.

It is found in the cell inner membrane. Could be involved in insertion of integral membrane proteins into the membrane. The protein is Putative membrane protein insertion efficiency factor of Shewanella halifaxensis (strain HAW-EB4).